The chain runs to 215 residues: Probable GTP-binding protein EngB (215 aa).

The EngB-type G domain maps to 26–200 (EGIEVAFAGR…RAKLDEWFAP (175 aa)). GTP is bound by residues 34 to 41 (GRSNAGKS), 61 to 65 (GRTQL), 79 to 82 (DLPG), 146 to 149 (TKAD), and 179 to 181 (FSS). Ser41 and Thr63 together coordinate Mg(2+).

This sequence belongs to the TRAFAC class TrmE-Era-EngA-EngB-Septin-like GTPase superfamily. EngB GTPase family. It depends on Mg(2+) as a cofactor.

Functionally, necessary for normal cell division and for the maintenance of normal septation. This is Probable GTP-binding protein EngB from Aliivibrio fischeri (strain MJ11) (Vibrio fischeri).